The chain runs to 223 residues: Ribose-5-phosphate isomerase A (223 aa).

Substrate contacts are provided by residues 28-31 (TGST), 81-84 (DGTD), and 94-97 (KGGG). Glu-103 acts as the Proton acceptor in catalysis. Lys-121 lines the substrate pocket.

It belongs to the ribose 5-phosphate isomerase family. In terms of assembly, homodimer.

The enzyme catalyses aldehydo-D-ribose 5-phosphate = D-ribulose 5-phosphate. It participates in carbohydrate degradation; pentose phosphate pathway; D-ribose 5-phosphate from D-ribulose 5-phosphate (non-oxidative stage): step 1/1. Its function is as follows. Catalyzes the reversible conversion of ribose-5-phosphate to ribulose 5-phosphate. The sequence is that of Ribose-5-phosphate isomerase A from Baumannia cicadellinicola subsp. Homalodisca coagulata.